A 150-amino-acid polypeptide reads, in one-letter code: Cytochrome c oxidase subunit 5A, mitochondrial (150 aa).

The N-terminal 41 residues, 1–41 (MLGAALRRCAVAATTRAGPRGLLHSARTPGPAAAIQSVRCX), are a transit peptide targeting the mitochondrion. Residues 2–17 (LGAALRRCAVAATTRA) carry the SIFI-degron motif. K87 and K113 each carry N6-acetyllysine. Position 141 is a phosphothreonine (T141).

Belongs to the cytochrome c oxidase subunit 5A family. Component of the cytochrome c oxidase (complex IV, CIV), a multisubunit enzyme composed of 14 subunits. The complex is composed of a catalytic core of 3 subunits MT-CO1, MT-CO2 and MT-CO3, encoded in the mitochondrial DNA, and 11 supernumerary subunits COX4I, COX5A, COX5B, COX6A, COX6B, COX6C, COX7A, COX7B, COX7C, COX8 and NDUFA4, which are encoded in the nuclear genome. The complex exists as a monomer or a dimer and forms supercomplexes (SCs) in the inner mitochondrial membrane with NADH-ubiquinone oxidoreductase (complex I, CI) and ubiquinol-cytochrome c oxidoreductase (cytochrome b-c1 complex, complex III, CIII), resulting in different assemblies (supercomplex SCI(1)III(2)IV(1) and megacomplex MCI(2)III(2)IV(2)). Interacts with AFG1L. Interacts with RAB5IF. In terms of processing, in response to mitochondrial stress, the precursor protein is ubiquitinated by the SIFI complex in the cytoplasm before mitochondrial import, leading to its degradation. Within the SIFI complex, UBR4 initiates ubiquitin chain that are further elongated or branched by KCMF1.

It is found in the mitochondrion inner membrane. It participates in energy metabolism; oxidative phosphorylation. Its function is as follows. Component of the cytochrome c oxidase, the last enzyme in the mitochondrial electron transport chain which drives oxidative phosphorylation. The respiratory chain contains 3 multisubunit complexes succinate dehydrogenase (complex II, CII), ubiquinol-cytochrome c oxidoreductase (cytochrome b-c1 complex, complex III, CIII) and cytochrome c oxidase (complex IV, CIV), that cooperate to transfer electrons derived from NADH and succinate to molecular oxygen, creating an electrochemical gradient over the inner membrane that drives transmembrane transport and the ATP synthase. Cytochrome c oxidase is the component of the respiratory chain that catalyzes the reduction of oxygen to water. Electrons originating from reduced cytochrome c in the intermembrane space (IMS) are transferred via the dinuclear copper A center (CU(A)) of subunit 2 and heme A of subunit 1 to the active site in subunit 1, a binuclear center (BNC) formed by heme A3 and copper B (CU(B)). The BNC reduces molecular oxygen to 2 water molecules using 4 electrons from cytochrome c in the IMS and 4 protons from the mitochondrial matrix. This is Cytochrome c oxidase subunit 5A, mitochondrial (COX5A) from Pan paniscus (Pygmy chimpanzee).